We begin with the raw amino-acid sequence, 947 residues long: Zinc finger CCCH domain-containing protein 18 (947 aa).

An N-acetylmethionine modification is found at M1. Disordered regions lie at residues M1–T218, G275–A295, and Y387–R921. Residues S6, S32, S44, S57, S63, S70, S74, S79, and S91 each carry the phosphoserine modification. Positions K73–S85 are enriched in basic and acidic residues. Residues E94–T104 are compositionally biased toward acidic residues. Phosphothreonine is present on T104. Residues S105 and S113 each carry the phosphoserine modification. Residues S105–D119 are compositionally biased toward basic and acidic residues. 2 stretches are compositionally biased toward acidic residues: residues E120 to E131 and Q138 to K153. Residues E160 to D185 show a composition bias toward basic and acidic residues. At S168 the chain carries Phosphoserine. A compositionally biased stretch (acidic residues) spans D186 to E202. Residues G203–K212 are compositionally biased toward basic and acidic residues. The C3H1-type zinc-finger motif lies at R214–V240. Residues E391–K479 are compositionally biased toward basic and acidic residues. The residue at position 482 (S482) is a Phosphoserine. K505 participates in a covalent cross-link: Glycyl lysine isopeptide (Lys-Gly) (interchain with G-Cter in SUMO2). Over residues K505–R515 the composition is skewed to basic and acidic residues. A phosphoserine mark is found at S527, S529, and S531. Positions S540 to P601 are enriched in low complexity. A compositionally biased stretch (pro residues) spans S602–R611. Residues K617 and K656 each participate in a glycyl lysine isopeptide (Lys-Gly) (interchain with G-Cter in SUMO2) cross-link. Over residues K656–R665 the composition is skewed to basic and acidic residues. Composition is skewed to low complexity over residues G687–S720 and A731–A745. Basic and acidic residues predominate over residues K755–P769. Positions P773 to S804 are enriched in low complexity. K809 carries the N6-acetyllysine modification. A Glycyl lysine isopeptide (Lys-Gly) (interchain with G-Cter in SUMO2) cross-link involves residue K812. Residues A819 to Q836 show a composition bias toward basic and acidic residues. S837, S846, S862, S887, and S890 each carry phosphoserine. Residues S887 to T918 show a composition bias toward low complexity. Residue K902 forms a Glycyl lysine isopeptide (Lys-Gly) (interchain with G-Cter in SUMO2) linkage. The stretch at K915–P944 forms a coiled coil.

As to quaternary structure, interacts with ZFC3H1 in a RNase-insensitive manner.

The protein localises to the nucleus. The sequence is that of Zinc finger CCCH domain-containing protein 18 (Zc3h18) from Rattus norvegicus (Rat).